The primary structure comprises 89 residues: Putative membrane protein insertion efficiency factor (89 aa).

Belongs to the UPF0161 family.

Its subcellular location is the cell inner membrane. Its function is as follows. Could be involved in insertion of integral membrane proteins into the membrane. The polypeptide is Putative membrane protein insertion efficiency factor (Petrotoga mobilis (strain DSM 10674 / SJ95)).